A 173-amino-acid chain; its full sequence is ATP-dependent protease subunit HslV (173 aa).

The active site involves Thr-2. Na(+)-binding residues include Gly-158, Asp-161, and Ser-164.

This sequence belongs to the peptidase T1B family. HslV subfamily. In terms of assembly, a double ring-shaped homohexamer of HslV is capped on each side by a ring-shaped HslU homohexamer. The assembly of the HslU/HslV complex is dependent on binding of ATP.

It localises to the cytoplasm. The enzyme catalyses ATP-dependent cleavage of peptide bonds with broad specificity.. Its activity is regulated as follows. Allosterically activated by HslU binding. Its function is as follows. Protease subunit of a proteasome-like degradation complex believed to be a general protein degrading machinery. The chain is ATP-dependent protease subunit HslV from Haemophilus ducreyi (strain 35000HP / ATCC 700724).